The sequence spans 405 residues: Teichoic acid D-alanyltransferase (405 aa).

The Extracellular portion of the chain corresponds to Met-1–Asn-9. The helical transmembrane segment at Pro-10–Lys-29 threads the bilayer. At Gly-30 to Met-33 the chain is on the cytoplasmic side. Residues His-34–Phe-49 traverse the membrane as a helical segment. Topologically, residues Asp-50 to Lys-53 are extracellular. Residues Trp-54 to Arg-80 traverse the membrane as a helical segment. The Cytoplasmic segment spans residues Glu-81–Ser-86. The helical transmembrane segment at Thr-87–Gln-111 threads the bilayer. Topologically, residues His-112–Gly-121 are extracellular. A helical membrane pass occupies residues Ile-122–Asp-138. Over Gly-139–Asn-145 the chain is Cytoplasmic. Residues Met-146–Asp-175 lie within the membrane without spanning it. The Cytoplasmic portion of the chain corresponds to Arg-176 to Asp-179. Residues Pro-180–Ser-223 form a helical membrane-spanning segment. The Extracellular portion of the chain corresponds to Arg-224–Ser-232. A helical transmembrane segment spans residues Trp-233–Met-264. The Cytoplasmic portion of the chain corresponds to Gly-265–Lys-274. An intramembrane segment occupies Pro-275–His-310. The Cytoplasmic segment spans residues Lys-311–Ser-315. A helical membrane pass occupies residues Arg-316–His-335. Residue His-335 is part of the active site. Over Gly-336–Thr-338 the chain is Extracellular. The helical transmembrane segment at Trp-339–Asn-372 threads the bilayer. The Cytoplasmic segment spans residues Arg-373–Pro-378. The chain crosses the membrane as a helical span at residues Ser-379–Leu-399. Residues Asp-400–His-405 are Extracellular-facing.

It belongs to the membrane-bound acyltransferase family.

It localises to the cell membrane. It participates in cell wall biogenesis; lipoteichoic acid biosynthesis. O-acyltransferase that catalyzes D-alanylation of both teichoic acid and lipoteichoic acid (LTA). D-alanylation of LTA plays an important role in modulating the properties of the cell wall in Gram-positive bacteria, influencing the net charge of the cell wall. Catalyzes D-alanylation from DltC carrier protein. The chain is Teichoic acid D-alanyltransferase from Lacticaseibacillus rhamnosus (Lactobacillus rhamnosus).